Here is a 355-residue protein sequence, read N- to C-terminus: Phospho-N-acetylmuramoyl-pentapeptide-transferase (355 aa).

10 consecutive transmembrane segments (helical) span residues 3–23, 56–76, 80–100, 120–140, 156–176, 185–205, 224–244, 251–271, 276–296, and 330–350; these read GVLIAAMVALVVSLLGTPWVI, VIIVAALAGYFLAHLVTGIGF, GLLVLMVMTGLGLVGFLDDYI, AAVAIVFGLLAVRFKNDAGLL, VGIIAFPLLAWIIIAATSNAV, LAAGTSAMVFGAYVIISFWQF, PLDVALVAAAAMGACFGFLWW, IFMGDTGSLALGGAFASIAIV, LLLVVLGGLFVIETLSVMIQV, and FWIVSGLAVAFGLGLFYAEFL.

This sequence belongs to the glycosyltransferase 4 family. MraY subfamily. Requires Mg(2+) as cofactor.

The protein localises to the cell membrane. It carries out the reaction UDP-N-acetyl-alpha-D-muramoyl-L-alanyl-gamma-D-glutamyl-meso-2,6-diaminopimeloyl-D-alanyl-D-alanine + di-trans,octa-cis-undecaprenyl phosphate = di-trans,octa-cis-undecaprenyl diphospho-N-acetyl-alpha-D-muramoyl-L-alanyl-D-glutamyl-meso-2,6-diaminopimeloyl-D-alanyl-D-alanine + UMP. Its pathway is cell wall biogenesis; peptidoglycan biosynthesis. In terms of biological role, catalyzes the initial step of the lipid cycle reactions in the biosynthesis of the cell wall peptidoglycan: transfers peptidoglycan precursor phospho-MurNAc-pentapeptide from UDP-MurNAc-pentapeptide onto the lipid carrier undecaprenyl phosphate, yielding undecaprenyl-pyrophosphoryl-MurNAc-pentapeptide, known as lipid I. In Frankia casuarinae (strain DSM 45818 / CECT 9043 / HFP020203 / CcI3), this protein is Phospho-N-acetylmuramoyl-pentapeptide-transferase.